Here is a 661-residue protein sequence, read N- to C-terminus: Immunoglobulin-like domain-containing receptor 2 (661 aa).

The first 35 residues, 1–35, serve as a signal peptide directing secretion; it reads MPAFPTLDLDGKLGKMDRVVLGWTAVFWLTAMVEG. One can recognise an Ig-like V-type domain in the interval 36-177; that stretch reads LQVTVPDKKK…LEGKNEDSVE (142 aa). The Lumenal segment spans residues 36–201; the sequence is LQVTVPDKKK…PSFAVEIMPE (166 aa). The cysteines at positions 57 and 160 are disulfide-linked. Residues 202-222 traverse the membrane as a helical segment; that stretch reads WVFVGLVILGIFLFFVLVGIC. Over 223–661 the chain is Cytoplasmic; that stretch reads WCQCCPHSCC…DFPTRMSLVV (439 aa). 3 disordered regions span residues 288 to 310, 410 to 429, and 453 to 661; these read LMDKPHPPPLAPSDSTGGSHSVR, EDRESFRHSQQRSKSEMLSR, and QRSR…SLVV. Composition is skewed to basic and acidic residues over residues 410 to 428 and 463 to 478; these read EDRESFRHSQQRSKSEMLS and HEARAGSRFERSESRA. Residue Ser487 is modified to Phosphoserine. Positions 491 to 506 are enriched in basic and acidic residues; sequence YYGRGRSREPPGDGER. Residue Arg559 is modified to Omega-N-methylarginine. Ser594 is subject to Phosphoserine. Residues 595 to 607 show a composition bias toward acidic residues; sequence EGEDEDDAADEDA. A compositionally biased stretch (basic and acidic residues) spans 628 to 639; sequence RGRDLSFHSNSE.

This sequence belongs to the immunoglobulin superfamily. LISCH7 family. In terms of assembly, interacts with MARVELD2 and OCLN. Interacts with P4HB and HSPA5; the interaction with HSPA5 stabilizes ILDR2 expression. Interacts (via C-terminus) with TRA2A, TRA2B and SRSF1. As to expression, expressed in epithelial tissues, mainly in liver, kidney and colon.

Its subcellular location is the endoplasmic reticulum membrane. It is found in the cell junction. The protein resides in the tight junction. It localises to the nucleus. Functionally, may be involved in ER stress pathways with effects on lipid homeostasis and insulin secretion. With ILDR1 and LSR, involved in the maintain of the epithelial barrier function through the recruitment of MARVELD2/tricellulin to tricellular tight junctions. Also functions as a B7-like protein family member expressed on immune cells and inflamed tissue and with T-cell inhibitory activity. In the inner ear, may regulate alternative pre-mRNA splicing via binding to TRA2A, TRA2B and SRSF1. This Mus musculus (Mouse) protein is Immunoglobulin-like domain-containing receptor 2.